The primary structure comprises 460 residues: Serine hydroxymethyltransferase, cytosolic (460 aa).

N6-(pyridoxal phosphate)lysine is present on Lys-244.

Belongs to the SHMT family. Homotetramer. Pyridoxal 5'-phosphate serves as cofactor.

The protein resides in the cytoplasm. The catalysed reaction is (6R)-5,10-methylene-5,6,7,8-tetrahydrofolate + glycine + H2O = (6S)-5,6,7,8-tetrahydrofolate + L-serine. It participates in one-carbon metabolism; tetrahydrofolate interconversion. In terms of biological role, interconversion of serine and glycine. The protein is Serine hydroxymethyltransferase, cytosolic (SHMT-1) of Encephalitozoon cuniculi (strain GB-M1) (Microsporidian parasite).